Consider the following 98-residue polypeptide: Integration host factor subunit alpha (98 aa).

The protein belongs to the bacterial histone-like protein family. As to quaternary structure, heterodimer of an alpha and a beta chain.

This protein is one of the two subunits of integration host factor, a specific DNA-binding protein that functions in genetic recombination as well as in transcriptional and translational control. This Marinomonas sp. (strain MWYL1) protein is Integration host factor subunit alpha.